The primary structure comprises 186 residues: MSDVIDLSDAERRMKGALEAVRHQFATIRTGRANPALLDRIEVEAYGTRMPIKSVASIGAPEPRLLTITPYDPNLLKTIERAIRDSDLGLNPQNDGKIIRLPIPELTEERRRELIRLVRHMAEEGRVSVRNVRRDEMHDIQRLRREGEISEDDERRAEAELQKLTDAYIKRIDEALAEKEAELMEV.

It belongs to the RRF family.

It localises to the cytoplasm. Functionally, responsible for the release of ribosomes from messenger RNA at the termination of protein biosynthesis. May increase the efficiency of translation by recycling ribosomes from one round of translation to another. In Rubrobacter xylanophilus (strain DSM 9941 / JCM 11954 / NBRC 16129 / PRD-1), this protein is Ribosome-recycling factor.